Here is a 227-residue protein sequence, read N- to C-terminus: Uracil-DNA glycosylase (227 aa).

D68 acts as the Proton acceptor in catalysis.

This sequence belongs to the uracil-DNA glycosylase (UDG) superfamily. UNG family.

It is found in the cytoplasm. The catalysed reaction is Hydrolyzes single-stranded DNA or mismatched double-stranded DNA and polynucleotides, releasing free uracil.. Its function is as follows. Excises uracil residues from the DNA which can arise as a result of misincorporation of dUMP residues by DNA polymerase or due to deamination of cytosine. This Mycolicibacterium smegmatis (strain ATCC 700084 / mc(2)155) (Mycobacterium smegmatis) protein is Uracil-DNA glycosylase.